The chain runs to 393 residues: S-adenosylmethionine synthase (393 aa).

Glutamate 9 contributes to the Mg(2+) binding site. Histidine 15 is an ATP binding site. A K(+)-binding site is contributed by glutamate 43. Residues glutamate 56 and glutamine 99 each coordinate L-methionine. Residues 167–169 (DGK), 235–238 (SGRF), aspartate 246, 252–253 (RK), alanine 269, lysine 273, and lysine 277 each bind ATP. An L-methionine-binding site is contributed by aspartate 246. Lysine 277 provides a ligand contact to L-methionine.

Belongs to the AdoMet synthase family. As to quaternary structure, homotetramer. The cofactor is Mn(2+). It depends on Mg(2+) as a cofactor. Co(2+) is required as a cofactor. K(+) serves as cofactor.

Its subcellular location is the cytoplasm. The enzyme catalyses L-methionine + ATP + H2O = S-adenosyl-L-methionine + phosphate + diphosphate. Its pathway is amino-acid biosynthesis; S-adenosyl-L-methionine biosynthesis; S-adenosyl-L-methionine from L-methionine: step 1/1. Its function is as follows. Catalyzes the formation of S-adenosylmethionine from methionine and ATP. The reaction comprises two steps that are both catalyzed by the same enzyme: formation of S-adenosylmethionine (AdoMet) and triphosphate, and subsequent hydrolysis of the triphosphate. This Camellia sinensis (Tea plant) protein is S-adenosylmethionine synthase (SAM).